A 130-amino-acid chain; its full sequence is Small ribosomal subunit protein uS11c (130 aa).

Belongs to the universal ribosomal protein uS11 family. In terms of assembly, part of the 30S ribosomal subunit.

The protein localises to the plastid. It localises to the chloroplast. The chain is Small ribosomal subunit protein uS11c from Chara vulgaris (Common stonewort).